The primary structure comprises 119 residues: Large ribosomal subunit protein bL12 (119 aa).

Belongs to the bacterial ribosomal protein bL12 family. In terms of assembly, homodimer. Part of the ribosomal stalk of the 50S ribosomal subunit. Forms a multimeric L10(L12)X complex, where L10 forms an elongated spine to which 2 to 4 L12 dimers bind in a sequential fashion. Binds GTP-bound translation factors.

Its function is as follows. Forms part of the ribosomal stalk which helps the ribosome interact with GTP-bound translation factors. Is thus essential for accurate translation. This is Large ribosomal subunit protein bL12 from Bacillus cytotoxicus (strain DSM 22905 / CIP 110041 / 391-98 / NVH 391-98).